The following is a 483-amino-acid chain: Rhamnulokinase (483 aa).

11–15 (ASSGR) lines the ATP pocket. Residues Gly79 and 234-236 (HDT) contribute to the substrate site. The active-site Proton acceptor is the Asp235. An ATP-binding site is contributed by Thr257. Asn294 lines the substrate pocket. Position 302 (Gln302) interacts with ATP. Cys352 and Cys369 are oxidised to a cystine. Residue Gly401 coordinates ATP.

The protein belongs to the rhamnulokinase family. The cofactor is Mg(2+).

The catalysed reaction is L-rhamnulose + ATP = L-rhamnulose 1-phosphate + ADP + H(+). It functions in the pathway carbohydrate degradation; L-rhamnose degradation; glycerone phosphate from L-rhamnose: step 2/3. Involved in the catabolism of L-rhamnose (6-deoxy-L-mannose). Catalyzes the transfer of the gamma-phosphate group from ATP to the 1-hydroxyl group of L-rhamnulose to yield L-rhamnulose 1-phosphate. In Listeria monocytogenes serotype 4b (strain F2365), this protein is Rhamnulokinase.